The chain runs to 424 residues: 5-methylthioadenosine/S-adenosylhomocysteine deaminase (424 aa).

Positions 60 and 62 each coordinate Zn(2+). Residues E89 and H181 each coordinate substrate. H208 contributes to the Zn(2+) binding site. Positions 211 and 296 each coordinate substrate. D296 is a Zn(2+) binding site.

Belongs to the metallo-dependent hydrolases superfamily. MTA/SAH deaminase family. It depends on Zn(2+) as a cofactor.

The catalysed reaction is S-adenosyl-L-homocysteine + H2O + H(+) = S-inosyl-L-homocysteine + NH4(+). It catalyses the reaction S-methyl-5'-thioadenosine + H2O + H(+) = S-methyl-5'-thioinosine + NH4(+). Its function is as follows. Catalyzes the deamination of 5-methylthioadenosine and S-adenosyl-L-homocysteine into 5-methylthioinosine and S-inosyl-L-homocysteine, respectively. Is also able to deaminate adenosine. The chain is 5-methylthioadenosine/S-adenosylhomocysteine deaminase from Thermococcus kodakarensis (strain ATCC BAA-918 / JCM 12380 / KOD1) (Pyrococcus kodakaraensis (strain KOD1)).